The primary structure comprises 240 residues: UDP-2,3-diacylglucosamine hydrolase (240 aa).

Asp8, His10, Asp41, Asn79, and His114 together coordinate Mn(2+). 79 to 80 (NR) provides a ligand contact to substrate. Asp122, Ser160, Asn164, Lys167, and His195 together coordinate substrate. His195 and His197 together coordinate Mn(2+).

Belongs to the LpxH family. Requires Mn(2+) as cofactor.

It is found in the cell inner membrane. The enzyme catalyses UDP-2-N,3-O-bis[(3R)-3-hydroxytetradecanoyl]-alpha-D-glucosamine + H2O = 2-N,3-O-bis[(3R)-3-hydroxytetradecanoyl]-alpha-D-glucosaminyl 1-phosphate + UMP + 2 H(+). Its pathway is glycolipid biosynthesis; lipid IV(A) biosynthesis; lipid IV(A) from (3R)-3-hydroxytetradecanoyl-[acyl-carrier-protein] and UDP-N-acetyl-alpha-D-glucosamine: step 4/6. Functionally, hydrolyzes the pyrophosphate bond of UDP-2,3-diacylglucosamine to yield 2,3-diacylglucosamine 1-phosphate (lipid X) and UMP by catalyzing the attack of water at the alpha-P atom. Involved in the biosynthesis of lipid A, a phosphorylated glycolipid that anchors the lipopolysaccharide to the outer membrane of the cell. The protein is UDP-2,3-diacylglucosamine hydrolase of Salmonella arizonae (strain ATCC BAA-731 / CDC346-86 / RSK2980).